Consider the following 300-residue polypeptide: 2-dehydropantoate 2-reductase (300 aa).

NADP(+)-binding positions include 7–12, Lys74, Asn99, and Ala123; that span reads GAGAIG. Lys179 acts as the Proton donor in catalysis. Residues Lys179, Asn183, Asn187, Asn197, and 246–249 contribute to the substrate site; that span reads NYNS. Position 261 (Glu261) interacts with NADP(+).

This sequence belongs to the ketopantoate reductase family.

Its subcellular location is the cytoplasm. It catalyses the reaction (R)-pantoate + NAD(+) = 2-dehydropantoate + NADH + H(+). It carries out the reaction (R)-pantoate + NADP(+) = 2-dehydropantoate + NADPH + H(+). It participates in cofactor biosynthesis; coenzyme A biosynthesis. Catalyzes the NAD(P)H-dependent reduction of ketopantoate into pantoic acid. The sequence is that of 2-dehydropantoate 2-reductase (apbA) from Pyrococcus abyssi (strain GE5 / Orsay).